The following is a 305-amino-acid chain: MSRIVIALGGNALLQNGEKRDYETQYEHAYKTFESLRFVTEDNEVVITHGNGPQVGDIQQSHDISGIGAYLHQSVAMSQGYIGEILANAYTNIKTKYNLRKNIFTIITRVLVDENDPAFSNPEKPIGRYYSDAEVEEARKNGWIMKKFRDGWRRVVPSPDPRQILEEPVIEYLLHNGNLPIAVGGGGVPVVRKGEQIHGIDAVIDKDLASSVLATAIRADFLMILTDVDNVYVNYGKPDQKGLHEVHVEEIEKYLKEGQFGEGSMKPKVMAAIRFIKNGGKKAFITSIENSMNALSGRSGTIIVR.

It belongs to the carbamate kinase family.

It localises to the cytoplasm. It carries out the reaction hydrogencarbonate + NH4(+) + ATP = carbamoyl phosphate + ADP + H2O + H(+). Its pathway is metabolic intermediate metabolism; carbamoyl phosphate degradation; CO(2) and NH(3) from carbamoyl phosphate: step 1/1. The chain is Carbamate kinase (arcC) from Thermoplasma acidophilum (strain ATCC 25905 / DSM 1728 / JCM 9062 / NBRC 15155 / AMRC-C165).